Consider the following 220-residue polypeptide: VQ motif-containing protein 5 (220 aa).

Positions 49 to 57 (FKSLVQQLT) match the VQ motif. 2 disordered regions span residues 61-80 (PCDR…PEPI) and 131-171 (HMMA…GASS). Composition is skewed to polar residues over residues 133–150 (MAQS…QSNG) and 157–171 (SWFN…GASS).

Its subcellular location is the nucleus. In terms of biological role, may function as negative regulator of plant defense. This is VQ motif-containing protein 5 from Arabidopsis thaliana (Mouse-ear cress).